The primary structure comprises 344 residues: Dihydroorotase (344 aa).

2 residues coordinate Zn(2+): His13 and His15. Residues 15-17 (HVR) and Asn41 each bind substrate. Positions 99, 136, and 174 each coordinate Zn(2+). At Lys99 the chain carries N6-carboxylysine. His136 provides a ligand contact to substrate. Leu219 contributes to the substrate binding site. Asp247 is a Zn(2+) binding site. Asp247 is an active-site residue. Substrate-binding residues include His251 and Ala263.

It belongs to the metallo-dependent hydrolases superfamily. DHOase family. Class II DHOase subfamily. Homodimer. It depends on Zn(2+) as a cofactor.

It carries out the reaction (S)-dihydroorotate + H2O = N-carbamoyl-L-aspartate + H(+). The protein operates within pyrimidine metabolism; UMP biosynthesis via de novo pathway; (S)-dihydroorotate from bicarbonate: step 3/3. In terms of biological role, catalyzes the reversible cyclization of carbamoyl aspartate to dihydroorotate. The polypeptide is Dihydroorotase (Aromatoleum aromaticum (strain DSM 19018 / LMG 30748 / EbN1) (Azoarcus sp. (strain EbN1))).